Here is a 116-residue protein sequence, read N- to C-terminus: MSESLKNSQQFGNVYKNGKSFANKYLVMYVCKNELSINRLGISVSKKVGNSVVRHRISRLIRESYRLNDSISNSGLDIVIVARAGSKGKNYSEISSALMHLAKLHKIISSSEPDRN.

The protein belongs to the RnpA family. Consists of a catalytic RNA component (M1 or rnpB) and a protein subunit.

The catalysed reaction is Endonucleolytic cleavage of RNA, removing 5'-extranucleotides from tRNA precursor.. Its function is as follows. RNaseP catalyzes the removal of the 5'-leader sequence from pre-tRNA to produce the mature 5'-terminus. It can also cleave other RNA substrates such as 4.5S RNA. The protein component plays an auxiliary but essential role in vivo by binding to the 5'-leader sequence and broadening the substrate specificity of the ribozyme. The sequence is that of Ribonuclease P protein component from Lachnoclostridium phytofermentans (strain ATCC 700394 / DSM 18823 / ISDg) (Clostridium phytofermentans).